The primary structure comprises 94 residues: Large ribosomal subunit protein uL23 (94 aa).

Belongs to the universal ribosomal protein uL23 family. Part of the 50S ribosomal subunit. Contacts protein L29, and trigger factor when it is bound to the ribosome.

Functionally, one of the early assembly proteins it binds 23S rRNA. One of the proteins that surrounds the polypeptide exit tunnel on the outside of the ribosome. Forms the main docking site for trigger factor binding to the ribosome. This Geobacter metallireducens (strain ATCC 53774 / DSM 7210 / GS-15) protein is Large ribosomal subunit protein uL23.